The following is an 863-amino-acid chain: Dynamin-3 (863 aa).

The Dynamin-type G domain maps to 28-294 (LLELPQIAVV…LTNHIRDTLP (267 aa)). A G1 motif region spans residues 38-45 (GGQSAGKS). Position 38 to 46 (38 to 46 (GGQSAGKSS)) interacts with GTP. The interval 64-66 (VTR) is G2 motif. Positions 136–139 (DLPG) are G3 motif. The segment at 205 to 208 (TKLD) is G4 motif. Residue 205–211 (TKLDLMD) participates in GTP binding. Y231 carries the post-translational modification Phosphotyrosine. Residues 235-238 (VNRS) are G5 motif. A GTP-binding site is contributed by 236–239 (NRSQ). K299 carries the N6-acetyllysine modification. The PH domain occupies 515–621 (QVIRKGWLTV…WKASLLRAGV (107 aa)). Y593 bears the Phosphotyrosine mark. At K594 the chain carries N6-acetyllysine. Disordered regions lie at residues 626-647 (SVGS…SMDP) and 742-863 (ATVS…SLLD). The segment covering 627-642 (VGSNKTENDENGQAEN) has biased composition (polar residues). Residues 653–744 (VETIRNLVDS…IIGDINTATV (92 aa)) enclose the GED domain. Phosphoserine occurs at positions 763 and 767. 2 stretches are compositionally biased toward pro residues: residues 791 to 816 (PAIP…PPFP) and 826 to 849 (PQVP…PSPT). S847 bears the Phosphoserine mark.

It belongs to the TRAFAC class dynamin-like GTPase superfamily. Dynamin/Fzo/YdjA family.

The protein localises to the cytoplasm. It is found in the cytoskeleton. The enzyme catalyses GTP + H2O = GDP + phosphate + H(+). In terms of biological role, microtubule-associated force-producing protein involved in producing microtubule bundles and able to bind and hydrolyze GTP. Most probably involved in vesicular trafficking processes, in particular endocytosis. The protein is Dynamin-3 (Dnm3) of Mus musculus (Mouse).